Here is a 41-residue protein sequence, read N- to C-terminus: Photosystem II reaction center protein Y (41 aa).

Residues 7–25 (VAIVLAPIAVAAGWAAFNI) form a helical membrane-spanning segment.

The protein belongs to the PsbY family. In terms of assembly, PSII is composed of 1 copy each of membrane proteins PsbA, PsbB, PsbC, PsbD, PsbE, PsbF, PsbH, PsbI, PsbJ, PsbK, PsbL, PsbM, PsbT, PsbX, PsbY, PsbZ, Psb30/Ycf12, peripheral proteins PsbO, CyanoQ (PsbQ), PsbU, PsbV and a large number of cofactors. It forms dimeric complexes.

The protein resides in the cellular thylakoid membrane. Its function is as follows. Loosely associated component of the core of photosystem II (PSII), it is not always seen in crystals. PSII is a light-driven water plastoquinone oxidoreductase, using light energy to abstract electrons from H(2)O, generating a proton gradient subsequently used for ATP formation. The sequence is that of Photosystem II reaction center protein Y from Nostoc sp. (strain PCC 7120 / SAG 25.82 / UTEX 2576).